Consider the following 255-residue polypeptide: uncharacterized protein (255 aa).

The first 18 residues, methionine 1–alanine 18, serve as a signal peptide directing secretion.

This sequence belongs to the MlaA family.

This is an uncharacterized protein from Rickettsia bellii (strain RML369-C).